Consider the following 249-residue polypeptide: ATP synthase subunit a, chloroplastic (249 aa).

5 helical membrane-spanning segments follow: residues 40 to 60 (QVLI…VLAI), 97 to 117 (VPFI…GALL), 136 to 156 (INTT…AGLS), 201 to 221 (LVVV…VMFL), and 222 to 242 (GLFT…AYIG).

Belongs to the ATPase A chain family. As to quaternary structure, F-type ATPases have 2 components, CF(1) - the catalytic core - and CF(0) - the membrane proton channel. CF(1) has five subunits: alpha(3), beta(3), gamma(1), delta(1), epsilon(1). CF(0) has four main subunits: a, b, b' and c.

It localises to the plastid. The protein localises to the chloroplast thylakoid membrane. Key component of the proton channel; it plays a direct role in the translocation of protons across the membrane. The polypeptide is ATP synthase subunit a, chloroplastic (Olimarabidopsis pumila (Dwarf rocket)).